The primary structure comprises 453 residues: Ribosomal protein uS12 methylthiotransferase RimO (453 aa).

The region spanning 9 to 124 (PKVGFVSLGC…VMEAVHTHLP (116 aa)) is the MTTase N-terminal domain. [4Fe-4S] cluster is bound by residues Cys18, Cys54, Cys83, Cys155, Cys159, and Cys162. A Radical SAM core domain is found at 141 to 382 (LTPKHYAYLK…MEVAERVSAR (242 aa)). In terms of domain architecture, TRAM spans 385–453 (QRKVGKSLRV…ADGHDLWGEV (69 aa)).

The protein belongs to the methylthiotransferase family. RimO subfamily. Requires [4Fe-4S] cluster as cofactor.

It localises to the cytoplasm. It carries out the reaction L-aspartate(89)-[ribosomal protein uS12]-hydrogen + (sulfur carrier)-SH + AH2 + 2 S-adenosyl-L-methionine = 3-methylsulfanyl-L-aspartate(89)-[ribosomal protein uS12]-hydrogen + (sulfur carrier)-H + 5'-deoxyadenosine + L-methionine + A + S-adenosyl-L-homocysteine + 2 H(+). In terms of biological role, catalyzes the methylthiolation of an aspartic acid residue of ribosomal protein uS12. This Ralstonia pickettii (strain 12J) protein is Ribosomal protein uS12 methylthiotransferase RimO.